Here is a 234-residue protein sequence, read N- to C-terminus: MRYAVICMLLLAASGCTAARQAPSPEPGLVPPPVVTTPEEKAENPGSLFSDENADLLYADYRARRVGDIVLINIVENSKAENKASTSTNKESTGEYGVSSFFDRSKVGIIPGQTLLSGRTGDVPLLKFSSVSDFSGDGETTRENTVTATIAARVTRVLPGGLMQVEGSRETRVNEETQIVTVSGLVRTSDVADDNSVMSTQMADARISYYGKGVISDKQRVGWFTRLMDNLWPF.

The first 15 residues, 1–15, serve as a signal peptide directing secretion; sequence MRYAVICMLLLAASG. A lipid anchor (N-palmitoyl cysteine) is attached at Cys16. A lipid anchor (S-diacylglycerol cysteine) is attached at Cys16.

The protein belongs to the FlgH family. As to quaternary structure, the basal body constitutes a major portion of the flagellar organelle and consists of four rings (L,P,S, and M) mounted on a central rod.

Its subcellular location is the cell outer membrane. The protein localises to the bacterial flagellum basal body. Its function is as follows. Assembles around the rod to form the L-ring and probably protects the motor/basal body from shearing forces during rotation. The protein is Flagellar L-ring protein of Oleidesulfovibrio alaskensis (strain ATCC BAA-1058 / DSM 17464 / G20) (Desulfovibrio alaskensis).